Consider the following 189-residue polypeptide: Large ribosomal subunit protein uL5 (189 aa).

It belongs to the universal ribosomal protein uL5 family. As to quaternary structure, part of the 50S ribosomal subunit; part of the 5S rRNA/L5/L18/L25 subcomplex. Contacts the 5S rRNA and the P site tRNA. Forms a bridge to the 30S subunit in the 70S ribosome.

Its function is as follows. This is one of the proteins that bind and probably mediate the attachment of the 5S RNA into the large ribosomal subunit, where it forms part of the central protuberance. In the 70S ribosome it contacts protein S13 of the 30S subunit (bridge B1b), connecting the 2 subunits; this bridge is implicated in subunit movement. Contacts the P site tRNA; the 5S rRNA and some of its associated proteins might help stabilize positioning of ribosome-bound tRNAs. This chain is Large ribosomal subunit protein uL5, found in Salinispora tropica (strain ATCC BAA-916 / DSM 44818 / JCM 13857 / NBRC 105044 / CNB-440).